The following is a 492-amino-acid chain: GTPase-activating protein MSB4 (492 aa).

The region spanning 147-367 is the Rab-GAP TBC domain; sequence GIPAEWRGNA…RIWDCLFYEE (221 aa).

The protein localises to the cytoplasm. It localises to the bud. It is found in the bud neck. Its function is as follows. Regulates exocytosis by functioning as a GAP for SEC4. Also required for efficient polarization of the actin patches. This is GTPase-activating protein MSB4 (MSB4) from Saccharomyces cerevisiae (strain ATCC 204508 / S288c) (Baker's yeast).